The chain runs to 307 residues: D-alanine--D-alanine ligase (307 aa).

One can recognise an ATP-grasp domain in the interval 105–304 (KMLWKGFGLP…FEQLVVKILE (200 aa)). 135–190 (VERLGLPLMVKPSREGSSVGLTKVNAVEELKNAVDLALTHDDTVLIEEWLSGIEMT) is an ATP binding site. 3 residues coordinate Mg(2+): aspartate 258, glutamate 271, and asparagine 273.

The protein belongs to the D-alanine--D-alanine ligase family. It depends on Mg(2+) as a cofactor. Mn(2+) is required as a cofactor.

The protein localises to the cytoplasm. The catalysed reaction is 2 D-alanine + ATP = D-alanyl-D-alanine + ADP + phosphate + H(+). It participates in cell wall biogenesis; peptidoglycan biosynthesis. In terms of biological role, cell wall formation. This chain is D-alanine--D-alanine ligase, found in Mannheimia succiniciproducens (strain KCTC 0769BP / MBEL55E).